The chain runs to 1555 residues: Phospholipid-transporting ATPase DNF1 (1555 aa).

The tract at residues 1-85 is disordered; that stretch reads MAPPQEEGGG…SSNNGGSAPR (85 aa). Topologically, residues 1 to 134 are cytoplasmic; it reads MAPPQEEGGG…PKNLWFQFHN (134 aa). Positions 22–37 are enriched in basic residues; it reads WATRRLTVKSGARKRL. Positions 72 to 82 are enriched in low complexity; that stretch reads GSISSSNNGGS. Residues 135–155 form a helical membrane-spanning segment; the sequence is IANIFFLFLVILVIFPIFGGV. N156 is a topological domain (extracellular). A helical membrane pass occupies residues 157-177; sequence PGLNSVPLIVIITVTAIKDAI. The Cytoplasmic portion of the chain corresponds to 178–491; sequence EDYRRTILDI…ARIARELNFN (314 aa). Residues 257–288 are disordered; it reads TRTAPWDPSHRRSVASHTEEIQMTPVPSPVPH. The chain crosses the membrane as a helical span at residues 492–512; that stretch reads VICNFGILLIMCLIAAIANGI. The Extracellular portion of the chain corresponds to 513–537; it reads AWGKTDASLAWFEYGSIGGTPALTG. Residues 538–558 traverse the membrane as a helical segment; that stretch reads FITFWAAVIVFQNLVPISLYI. The Cytoplasmic portion of the chain corresponds to 559–1123; the sequence is SLEIVRTLQA…TISNFFYKNM (565 aa). Catalysis depends on D606, which acts as the 4-aspartylphosphate intermediate. Positions 606, 607, 608, 740, 781, 783, 786, 804, 839, 840, 919, 920, 921, 1031, and 1037 each coordinate ATP. D606 contributes to the Mg(2+) binding site. T608 lines the Mg(2+) pocket. D1057 provides a ligand contact to Mg(2+). ATP-binding residues include N1060 and D1061. D1061 contributes to the Mg(2+) binding site. Residues 1124–1144 form a helical membrane-spanning segment; sequence IWTWSIFWYQCYCNFDIAYIF. The Extracellular segment spans residues 1145–1146; the sequence is EY. A helical membrane pass occupies residues 1147–1167; that stretch reads TYILMFNLFFTSVPVILMGVL. The Cytoplasmic portion of the chain corresponds to 1168–1200; sequence DQDVSDTVSLAVPQLYRRGIERKEWTQTKFWLY. Residues 1201-1221 traverse the membrane as a helical segment; it reads MIDGVYQSVMSFFIPFIFVVL. The Extracellular segment spans residues 1222–1237; the sequence is TPTAAGNGLDVSERTR. Residues 1238–1258 form a helical membrane-spanning segment; that stretch reads LGAYIAHPAVITINGYILINT. Over 1259–1262 the chain is Cytoplasmic; sequence YRWD. Residues 1263–1283 form a helical membrane-spanning segment; the sequence is WLMLLSIVLSDVFIFFWTGVY. Residues 1284 to 1302 are Extracellular-facing; it reads TATTYSAGFYQAAPQVYQE. Residues 1303-1323 traverse the membrane as a helical segment; that stretch reads LTFWMCLIVTPALCLLPRLVV. Residue R1320 participates in a 1,2-diacyl-sn-glycero-3-phospho-L-serine binding. Over 1324–1555 the chain is Cytoplasmic; sequence KCIQKQRFPY…EGEPPREPPM (232 aa). Disordered stretches follow at residues 1364-1456 and 1489-1555; these read VEGE…ERTR and ESTH…EPPM. Polar residues predominate over residues 1406–1432; the sequence is ATHNTRAQNGSDGTTYIMQSRTSTELQ. 2 stretches are compositionally biased toward basic and acidic residues: residues 1436-1456 and 1540-1555; these read PFDRDREEETPAVRPSIERTR and KSIDTTEGEPPREPPM.

Belongs to the cation transport ATPase (P-type) (TC 3.A.3) family. Type IV subfamily. In terms of assembly, component of a flippase complex consisting of DNF1 and CDC50. Interacts with CDC50; the interaction is direct. Mg(2+) serves as cofactor.

It is found in the cell membrane. The protein localises to the endosome membrane. The protein resides in the golgi apparatus. It localises to the trans-Golgi network membrane. The enzyme catalyses ATP + H2O + phospholipidSide 1 = ADP + phosphate + phospholipidSide 2.. It catalyses the reaction a 1,2-diacyl-sn-glycero-3-phosphoethanolamine(out) + ATP + H2O = a 1,2-diacyl-sn-glycero-3-phosphoethanolamine(in) + ADP + phosphate + H(+). The catalysed reaction is a 1,2-diacyl-sn-glycero-3-phosphocholine(out) + ATP + H2O = a 1,2-diacyl-sn-glycero-3-phosphocholine(in) + ADP + phosphate + H(+). It carries out the reaction a beta-D-glucosyl-(1&lt;-&gt;1')-N-acylsphing-4-enine(out) + ATP + H2O = a beta-D-glucosyl-(1&lt;-&gt;1')-N-acylsphing-4-enine(in) + ADP + phosphate + H(+). The enzyme catalyses a 1,2-diacyl-sn-glycero-3-phospho-L-serine(out) + ATP + H2O = a 1,2-diacyl-sn-glycero-3-phospho-L-serine(in) + ADP + phosphate + H(+). Functionally, catalytic component of a P4-ATPase flippase complex which catalyzes the hydrolysis of ATP coupled to the transport of phosphatidylcholine and phosphatidylserine from the lumenal to the cytosolic leaflet of membranes and ensures the maintenance of asymmetric distribution of phospholipids. May also transport glucosylceramide and phosphatidylethanolamine. This is Phospholipid-transporting ATPase DNF1 from Chaetomium thermophilum (strain DSM 1495 / CBS 144.50 / IMI 039719) (Thermochaetoides thermophila).